Consider the following 165-residue polypeptide: Putative TRAP transporter small permease protein HI_0051 (165 aa).

4 consecutive transmembrane segments (helical) span residues 20–40 (LEYL…FNSV), 51–71 (FSEE…IILV), 94–114 (IVLI…AYGA), and 136–156 (LYLA…FSMI).

Belongs to the TRAP transporter small permease family.

Its subcellular location is the cell inner membrane. The sequence is that of Putative TRAP transporter small permease protein HI_0051 from Haemophilus influenzae (strain ATCC 51907 / DSM 11121 / KW20 / Rd).